The chain runs to 288 residues: Shikimate dehydrogenase (NADP(+)) (288 aa).

Shikimate is bound by residues 15-17 and threonine 64; that span reads SKS. Catalysis depends on lysine 68, which acts as the Proton acceptor. An NADP(+)-binding site is contributed by glutamate 83. 2 residues coordinate shikimate: asparagine 92 and aspartate 117. NADP(+) contacts are provided by residues 141-145, 165-170, and methionine 232; these read GAGGA and NRTVSK. Shikimate is bound at residue tyrosine 234. Glycine 254 is a binding site for NADP(+).

This sequence belongs to the shikimate dehydrogenase family. Homodimer.

It catalyses the reaction shikimate + NADP(+) = 3-dehydroshikimate + NADPH + H(+). Its pathway is metabolic intermediate biosynthesis; chorismate biosynthesis; chorismate from D-erythrose 4-phosphate and phosphoenolpyruvate: step 4/7. Its function is as follows. Involved in the biosynthesis of the chorismate, which leads to the biosynthesis of aromatic amino acids. Catalyzes the reversible NADPH linked reduction of 3-dehydroshikimate (DHSA) to yield shikimate (SA). The protein is Shikimate dehydrogenase (NADP(+)) of Psychrobacter cryohalolentis (strain ATCC BAA-1226 / DSM 17306 / VKM B-2378 / K5).